The primary structure comprises 188 residues: Elongation factor P-like protein (188 aa).

It belongs to the elongation factor P family.

The polypeptide is Elongation factor P-like protein (Vibrio vulnificus (strain CMCP6)).